A 122-amino-acid polypeptide reads, in one-letter code: Large ribosomal subunit protein bL19 (122 aa).

Belongs to the bacterial ribosomal protein bL19 family.

This protein is located at the 30S-50S ribosomal subunit interface and may play a role in the structure and function of the aminoacyl-tRNA binding site. This chain is Large ribosomal subunit protein bL19 (rplS), found in Synechocystis sp. (strain ATCC 27184 / PCC 6803 / Kazusa).